The following is a 390-amino-acid chain: MTKNSNHDENEFISFEPNQNTKIRFEDADEDEVAEGSGVAGEETPQDESMFDAGESADTAEVTDDTTSADYYFDSYSHFGIHEEMLKDVVRTKTYQNVIYQNKFLIKDKIVLDVGAGTGILSLFCAKAGAAHVYAVECSQMADMAKEIVKANGFSDVITVLKGKIEEIELPTPKVDVIISEWMGYFLLFENMLDSVLYARDKWLVEGGVVLPDKASLHLTAIEDSEYKEDKIEFWNSVYGFDMSCIKKKAMMEPLVDTVDQNQIVTDSRLLKTMDISKMSSGDASFTAPFKLVAQRNDYIHALVAYFDVSFTMCHKLLGFSTGPKSRATHWKQTVLYLEDVLTICEGETITGTMSVSPNKKNPRDIDIKLSYSLNGQHCKISRTQHYKMR.

The span at 1–10 shows a compositional bias: basic and acidic residues; sequence MTKNSNHDEN. Residues 1 to 59 form a disordered region; that stretch reads MTKNSNHDENEFISFEPNQNTKIRFEDADEDEVAEGSGVAGEETPQDESMFDAGESADT. Residues 69-390 enclose the SAM-dependent MTase PRMT-type domain; the sequence is ADYYFDSYSH…ISRTQHYKMR (322 aa). Residues E181 and E190 contribute to the active site.

The protein belongs to the class I-like SAM-binding methyltransferase superfamily. Protein arginine N-methyltransferase family. Interacts with PRMT12, MBD7 and FIB2.

It is found in the nucleus. It localises to the cytoplasm. The catalysed reaction is L-arginyl-[protein] + 2 S-adenosyl-L-methionine = N(omega),N(omega)-dimethyl-L-arginyl-[protein] + 2 S-adenosyl-L-homocysteine + 2 H(+). Methylates (mono and asymmetric dimethylation) the guanidino nitrogens of arginyl residues present in a glycine and arginine-rich domain. Type I arginine methyltransferase active on both histones and non-histone proteins. Required for leaves and flowers development. Mediates the methylation of MBD7 and MED36A. The protein is Protein arginine N-methyltransferase 1.1 (PRMT11) of Arabidopsis thaliana (Mouse-ear cress).